The primary structure comprises 257 residues: Tryptophan synthase alpha chain (257 aa).

Active-site proton acceptor residues include Glu44 and Asp55.

The protein belongs to the TrpA family. In terms of assembly, tetramer of two alpha and two beta chains.

It catalyses the reaction (1S,2R)-1-C-(indol-3-yl)glycerol 3-phosphate + L-serine = D-glyceraldehyde 3-phosphate + L-tryptophan + H2O. It participates in amino-acid biosynthesis; L-tryptophan biosynthesis; L-tryptophan from chorismate: step 5/5. In terms of biological role, the alpha subunit is responsible for the aldol cleavage of indoleglycerol phosphate to indole and glyceraldehyde 3-phosphate. This Chlamydia caviae (strain ATCC VR-813 / DSM 19441 / 03DC25 / GPIC) (Chlamydophila caviae) protein is Tryptophan synthase alpha chain.